A 720-amino-acid chain; its full sequence is Mitogen-activated protein kinase 6 (720 aa).

A Peptide (Met-Gly) (interchain with G-Cter in ubiquitin) cross-link involves residue Met1. Residues 20–316 (YMDLKPLGCG…AEEALSHPYM (297 aa)) enclose the Protein kinase domain. ATP-binding positions include 26 to 34 (LGCGGNGLV) and Lys49. Catalysis depends on Asp152, which acts as the Proton acceptor. Phosphoserine; by PAK1, PAK2 and PAK3 is present on Ser189. The SEG motif signature appears at 189 to 191 (SEG). Residues 332–337 (FHIEDE) carry the FRIEDE motif motif. Residues Ser386, Ser554, and Ser556 each carry the phosphoserine modification. The interval 638-657 (SEMLETEPVEEGKRGERGRE) is disordered. The span at 647–657 (EEGKRGERGRE) shows a compositional bias: basic and acidic residues. Residue Ser683 is modified to Phosphoserine. Residues 700–714 (AMKSSPQIPHKTYSS) show a composition bias toward polar residues. Positions 700-720 (AMKSSPQIPHKTYSSILKHLN) are disordered.

Belongs to the protein kinase superfamily. CMGC Ser/Thr protein kinase family. MAP kinase subfamily. As to quaternary structure, heterodimer with ERK4/MAPK4. Interacts with (via FRIEDE motif) MAPKAPK5. Interacts with UBE3A; this interaction may be indirect and mediated by HERC2, possibly via HERC2 interaction with NEURL4. Mg(2+) is required as a cofactor. In terms of processing, phosphorylated at Ser-189 by PAK1, PAK2 and PAK3 resulting in catalytic activation. Phosphorylated by MAPKAPK5 at other sites. Ubiquitination at Met-1 leads to degradation by the proteasome pathway.

It is found in the cytoplasm. The protein resides in the nucleus. It catalyses the reaction L-seryl-[protein] + ATP = O-phospho-L-seryl-[protein] + ADP + H(+). It carries out the reaction L-threonyl-[protein] + ATP = O-phospho-L-threonyl-[protein] + ADP + H(+). Its activity is regulated as follows. Activated by phosphorylation at Ser-189. Atypical MAPK protein. Phosphorylates microtubule-associated protein 2 (MAP2) and MAPKAPK5. The precise role of the complex formed with MAPKAPK5 is still unclear, but the complex follows a complex set of phosphorylation events: upon interaction with atypical MAPKAPK5, ERK3/MAPK6 is phosphorylated at Ser-189 and then mediates phosphorylation and activation of MAPKAPK5, which in turn phosphorylates ERK3/MAPK6. May promote entry in the cell cycle. This chain is Mitogen-activated protein kinase 6 (Mapk6), found in Mus musculus (Mouse).